The sequence spans 473 residues: Ras-GEF domain-containing family member 1B (473 aa).

Residues 34 to 164 (HDNNLLSGSL…QMMQCLIRKL (131 aa)) form the N-terminal Ras-GEF domain. The region spanning 204-452 (NDPYTLAQQL…LYLASYESEG (249 aa)) is the Ras-GEF domain.

As to quaternary structure, interacts with Ras family proteins. Interacts with CCDC124 during cytokinesis.

Its subcellular location is the early endosome. It localises to the late endosome. The protein localises to the midbody. Functionally, guanine nucleotide exchange factor (GEF) with specificity for RAP2A, it doesn't seems to activate other Ras family proteins (in vitro). The sequence is that of Ras-GEF domain-containing family member 1B (RASGEF1B) from Homo sapiens (Human).